Reading from the N-terminus, the 309-residue chain is tRNA dimethylallyltransferase (309 aa).

10-17 (GPTAVGKT) serves as a coordination point for ATP. 12 to 17 (TAVGKT) contacts substrate. The tract at residues 35–38 (DSMQ) is interaction with substrate tRNA.

It belongs to the IPP transferase family. As to quaternary structure, monomer. The cofactor is Mg(2+).

It carries out the reaction adenosine(37) in tRNA + dimethylallyl diphosphate = N(6)-dimethylallyladenosine(37) in tRNA + diphosphate. Its function is as follows. Catalyzes the transfer of a dimethylallyl group onto the adenine at position 37 in tRNAs that read codons beginning with uridine, leading to the formation of N6-(dimethylallyl)adenosine (i(6)A). The protein is tRNA dimethylallyltransferase of Clostridium botulinum (strain Alaska E43 / Type E3).